The chain runs to 832 residues: Receptor-interacting serine/threonine-protein kinase 4 (832 aa).

One can recognise a Protein kinase domain in the interval 22–286 (FTGWEKVGSG…QGNGLNGELI (265 aa)). ATP is bound by residues 28–36 (VGSGGFGQV) and Lys-51. Residue Lys-51 forms a Glycyl lysine isopeptide (Lys-Gly) (interchain with G-Cter in ubiquitin) linkage. The active-site Proton acceptor is the Asp-143. Lys-145 is covalently cross-linked (Glycyl lysine isopeptide (Lys-Gly) (interchain with G-Cter in ubiquitin)). Disordered stretches follow at residues 325–368 (QEIT…RLKR) and 389–424 (SGVS…GVSS). The segment covering 329–342 (SETEDLCEKPDDEV) has biased composition (acidic residues). Residues 343-359 (KETAHDLDVKSPPEPRS) are compositionally biased toward basic and acidic residues. A compositionally biased stretch (low complexity) spans 403-424 (RSSSESKLPSSGSGKRLSGVSS). 10 ANK repeats span residues 485–514 (SGAS…NPNL), 518–547 (RGST…SVNA), 551–580 (DQWT…SVNE), 584–613 (EGRT…DVSL), 617–647 (DAWL…SVNA), 651–680 (DGRT…DVNV), 684–713 (LAQT…GKEA), 717–746 (DGYT…DVLA), 750–780 (LNQT…DLFD), and 782–811 (QGLS…HINL).

It belongs to the protein kinase superfamily. TKL Ser/Thr protein kinase family. Interacts with PRKCB. Interacts with TRAF1, TRAF2, TRAF3 and TRAF5. Interacts with BIRC2/c-IAP1, BIRC3/c-IAP2 and XIAP/BIRC4. May be phosphorylated by MAP3K2 and MAP3K3. In terms of processing, proteolytically cleaved by during Fas-induced apoptosis. Cleavage at Asp-388 and Asp-426. Post-translationally, polyubiquitinated with 'Lys-48' and 'Lys-63'-linked chains by BIRC2/c-IAP1 and BIRC3/c-IAP2, leading to activation of NF-kappa-B. In terms of tissue distribution, expressed in hair follicles and skin.

Its subcellular location is the cytoplasm. The protein localises to the membrane. It carries out the reaction L-seryl-[protein] + ATP = O-phospho-L-seryl-[protein] + ADP + H(+). The enzyme catalyses L-threonyl-[protein] + ATP = O-phospho-L-threonyl-[protein] + ADP + H(+). In terms of biological role, serine/threonine protein kinase. Required for embryonic skin development and correct skin homeostasis in adults, via phosphorylation of PKP1 and subsequent promotion of keratinocyte differentiation and cell adhesion. It is a direct transcriptional target of TP63. Plays a role in NF-kappa-B activation. This Homo sapiens (Human) protein is Receptor-interacting serine/threonine-protein kinase 4 (RIPK4).